The chain runs to 2179 residues: Genome polyprotein (2179 aa).

The disordered stretch occupies residues 1–20 (MGAQVSTQKSGSHENQNILT). Residue G2 is the site of N-myristoyl glycine; by host attachment. The Cytoplasmic segment spans residues 2–1491 (GAQVSTQKSG…AMNQASMIIN (1490 aa)). Residues 564–584 (ALTEGLGDELEEVIVEKTKQT) are amphipathic alpha-helix. Residues H876 and D894 each act as for protease 2A activity in the active site. Zn(2+) is bound by residues C911 and C913. Catalysis depends on C965, which acts as the For protease 2A activity. Zn(2+) contacts are provided by C971 and H973. Positions 1101-1173 (NDGWFRKFND…HISNPTQEKR (73 aa)) are membrane-binding. The segment at 1101-1239 (NDGWFRKFND…TPGSGKSLTT (139 aa)) is oligomerization. The tract at residues 1122-1126 (ANKIS) is RNA-binding. The region spanning 1205–1361 (KNKMVNYMQF…TTYTKNGKLN (157 aa)) is the SF3 helicase domain. Zn(2+) contacts are provided by C1369, C1372, C1381, and C1386. The C4-type zinc-finger motif lies at 1369-1386 (CKDCHQPSNFKKCCPLVC). An RNA-binding region spans residues 1413–1420 (DFKSKMQI). The oligomerization stretch occupies residues 1424 to 1429 (LETLFQ). An intramembrane segment occupies 1492–1507 (TILMFVSTLGIVYVIY). Residues 1508–2179 (KLFAQTQGPY…VLRRRWLDLF (672 aa)) lie on the Cytoplasmic side of the membrane. Y1517 carries the O-(5'-phospho-RNA)-tyrosine modification. One can recognise a Peptidase C3 domain in the interval 1538 to 1715 (GPNTEFALSL…FSAQLKKQYF (178 aa)). Residues H1577, E1608, and C1683 each act as for protease 3C activity in the active site. Positions 1946–2060 (GHLMAFDYSN…SYPYELDPQV (115 aa)) constitute a RdRp catalytic domain. Mg(2+)-binding residues include D1952 and D2046.

Belongs to the picornaviruses polyprotein family. In terms of assembly, interacts with capsid protein VP1 and capsid protein VP3 to form heterotrimeric protomers. As to quaternary structure, interacts with capsid protein VP0, and capsid protein VP3 to form heterotrimeric protomers. Five protomers subsequently associate to form pentamers which serve as building blocks for the capsid. Interacts with capsid protein VP2, capsid protein VP3 and capsid protein VP4 following cleavage of capsid protein VP0. Interacts with host ICAM1. Interacts with capsid protein VP1 and capsid protein VP3 in the mature capsid. In terms of assembly, interacts with capsid protein VP0 and capsid protein VP1 to form heterotrimeric protomers. Five protomers subsequently associate to form pentamers which serve as building blocks for the capsid. Interacts with capsid protein VP4 in the mature capsid. Interacts with protein 2C; this interaction may be important for virion morphogenesis. As to quaternary structure, interacts with capsid protein VP1 and capsid protein VP3. Homodimer. In terms of assembly, homohexamer; forms a hexameric ring structure with 6-fold symmetry characteristic of AAA+ ATPases. Interacts (via N-terminus) with host RTN3 (via reticulon domain); this interaction is important for viral replication. Interacts with capsid protein VP3; this interaction may be important for virion morphogenesis. As to quaternary structure, interacts with protein 3CD. Homodimer. Interacts with host GBF1. Interacts (via GOLD domain) with host ACBD3 (via GOLD domain); this interaction allows the formation of a viral protein 3A/ACBD3 heterotetramer with a 2:2 stoichiometry, which will stimulate the recruitment of host PI4KB in order to synthesize PI4P at the viral RNA replication sites. In terms of assembly, interacts with RNA-directed RNA polymerase. As to quaternary structure, interacts with protein 3AB and with RNA-directed RNA polymerase. Interacts with Viral protein genome-linked and with protein 3CD. The cofactor is Mg(2+). In terms of processing, specific enzymatic cleavages in vivo by the viral proteases yield processing intermediates and the mature proteins. Myristoylation is required for the formation of pentamers during virus assembly. Further assembly of 12 pentamers and a molecule of genomic RNA generates the provirion. Post-translationally, during virion maturation, immature virions are rendered infectious following cleavage of VP0 into VP4 and VP2. This maturation seems to be an autocatalytic event triggered by the presence of RNA in the capsid and it is followed by a conformational change infectious virion. In terms of processing, myristoylation is required during RNA encapsidation and formation of the mature virus particle. VPg is uridylylated by the polymerase into VPg-pUpU. This acts as a nucleotide-peptide primer for the genomic RNA replication.

Its subcellular location is the virion. It localises to the host cytoplasm. The protein localises to the host cytoplasmic vesicle membrane. It is found in the host nucleus. It catalyses the reaction a ribonucleoside 5'-triphosphate + H2O = a ribonucleoside 5'-diphosphate + phosphate + H(+). The catalysed reaction is Selective cleavage of Tyr-|-Gly bond in the picornavirus polyprotein.. The enzyme catalyses RNA(n) + a ribonucleoside 5'-triphosphate = RNA(n+1) + diphosphate. It carries out the reaction Selective cleavage of Gln-|-Gly bond in the poliovirus polyprotein. In other picornavirus reactions Glu may be substituted for Gln, and Ser or Thr for Gly.. Its activity is regulated as follows. Replication or transcription is subject to high level of random mutations by the nucleotide analog ribavirin. Its function is as follows. Forms an icosahedral capsid of pseudo T=3 symmetry with capsid proteins VP2 and VP3. The capsid is 300 Angstroms in diameter, composed of 60 copies of each capsid protein and enclosing the viral positive strand RNA genome. Capsid protein VP1 mainly forms the vertices of the capsid. Capsid protein VP1 interacts with host ICAM1 to provide virion attachment to target host cells. This attachment induces virion internalization. Tyrosine kinases are probably involved in the entry process. After binding to its receptor, the capsid undergoes conformational changes. Capsid protein VP1 N-terminus (that contains an amphipathic alpha-helix) and capsid protein VP4 are externalized. Together, they shape a pore in the host membrane through which viral genome is translocated to host cell cytoplasm. After genome has been released, the channel shrinks. Functionally, forms an icosahedral capsid of pseudo T=3 symmetry with capsid proteins VP2 and VP3. The capsid is 300 Angstroms in diameter, composed of 60 copies of each capsid protein and enclosing the viral positive strand RNA genome. In terms of biological role, lies on the inner surface of the capsid shell. After binding to the host receptor, the capsid undergoes conformational changes. Capsid protein VP4 is released, Capsid protein VP1 N-terminus is externalized, and together, they shape a pore in the host membrane through which the viral genome is translocated into the host cell cytoplasm. Component of immature procapsids, which is cleaved into capsid proteins VP4 and VP2 after maturation. Allows the capsid to remain inactive before the maturation step. Its function is as follows. Cysteine protease that cleaves viral polyprotein and specific host proteins. It is responsible for the autocatalytic cleavage between the P1 and P2 regions, which is the first cleavage occurring in the polyprotein. Also cleaves the host translation initiation factor EIF4G1, in order to shut down the capped cellular mRNA translation. Inhibits the host nucleus-cytoplasm protein and RNA trafficking by cleaving host members of the nuclear pores including NUP62 and NUP153. Counteracts stress granule formation probably by antagonizing its assembly or promoting its dissassembly. Functionally, plays an essential role in the virus replication cycle by acting as a viroporin. Creates a pore in the host endoplasmic reticulum and as a consequence releases Ca2+ in the cytoplasm of infected cell. In turn, high levels of cytoplasmic calcium may trigger membrane trafficking and transport of viral ER-associated proteins to viroplasms, sites of viral genome replication. In terms of biological role, induces and associates with structural rearrangements of intracellular membranes. Displays RNA-binding, nucleotide binding and NTPase activities. May play a role in virion morphogenesis and viral RNA encapsidation by interacting with the capsid protein VP3. Localizes the viral replication complex to the surface of membranous vesicles. Together with protein 3CD binds the Cis-Active RNA Element (CRE) which is involved in RNA synthesis initiation. Acts as a cofactor to stimulate the activity of 3D polymerase, maybe through a nucleid acid chaperone activity. Its function is as follows. Localizes the viral replication complex to the surface of membranous vesicles. It inhibits host cell endoplasmic reticulum-to-Golgi apparatus transport and causes the disassembly of the Golgi complex, possibly through GBF1 interaction. This would result in depletion of MHC, trail receptors and IFN receptors at the host cell surface. Plays an essential role in viral RNA replication by recruiting ACBD3 and PI4KB at the viral replication sites, thereby allowing the formation of the rearranged membranous structures where viral replication takes place. Functionally, acts as a primer for viral RNA replication and remains covalently bound to viral genomic RNA. VPg is uridylylated prior to priming replication into VPg-pUpU. The oriI viral genomic sequence may act as a template for this. The VPg-pUpU is then used as primer on the genomic RNA poly(A) by the RNA-dependent RNA polymerase to replicate the viral genome. During genome replication, the VPg-RNA linkage is removed by the host TDP2, thereby accelerating replication. During the late stage of the replication cycle, host TDP2 is excluded from sites of viral RNA synthesis and encapsidation, allowing for the generation of progeny virions. In terms of biological role, involved in the viral replication complex and viral polypeptide maturation. It exhibits protease activity with a specificity and catalytic efficiency that is different from protease 3C. Protein 3CD lacks polymerase activity. Protein 3CD binds to the 5'UTR of the viral genome. Major viral protease that mediates proteolytic processing of the polyprotein. Cleaves host EIF5B, contributing to host translation shutoff. Cleaves also host PABPC1, contributing to host translation shutoff. Cleaves host NLRP1, triggers host N-glycine-mediated degradation of the autoinhibitory NLRP1 N-terminal fragment. Its function is as follows. Replicates the viral genomic RNA on the surface of intracellular membranes. May form linear arrays of subunits that propagate along a strong head-to-tail interaction called interface-I. Covalently attaches UMP to a tyrosine of VPg, which is used to prime RNA synthesis. The positive stranded RNA genome is first replicated at virus induced membranous vesicles, creating a dsRNA genomic replication form. This dsRNA is then used as template to synthesize positive stranded RNA genomes. ss(+)RNA genomes are either translated, replicated or encapsidated. This chain is Genome polyprotein, found in Homo sapiens (Human).